The chain runs to 339 residues: Phenylalanine--tRNA ligase alpha subunit (339 aa).

Glu254 lines the Mg(2+) pocket.

The protein belongs to the class-II aminoacyl-tRNA synthetase family. Phe-tRNA synthetase alpha subunit type 1 subfamily. In terms of assembly, tetramer of two alpha and two beta subunits. The cofactor is Mg(2+).

The protein localises to the cytoplasm. It carries out the reaction tRNA(Phe) + L-phenylalanine + ATP = L-phenylalanyl-tRNA(Phe) + AMP + diphosphate + H(+). This is Phenylalanine--tRNA ligase alpha subunit from Clostridium acetobutylicum (strain ATCC 824 / DSM 792 / JCM 1419 / IAM 19013 / LMG 5710 / NBRC 13948 / NRRL B-527 / VKM B-1787 / 2291 / W).